A 533-amino-acid polypeptide reads, in one-letter code: Probable polyamine oxidase 5 (533 aa).

Positions 37, 45, 262, and 501 each coordinate FAD.

It belongs to the flavin monoamine oxidase family. It depends on FAD as a cofactor. As to expression, expressed in root vasculature, leaves and stems.

The protein localises to the cytoplasm. It catalyses the reaction spermine + O2 + H2O = 3-aminopropanal + spermidine + H2O2. The catalysed reaction is N(1)-acetylspermine + O2 + H2O = 3-acetamidopropanal + spermidine + H2O2. It carries out the reaction norspermine + O2 + H2O = norspermidine + 3-aminopropanal + H2O2. The enzyme catalyses thermospermine + O2 + H2O = 3-aminopropanal + spermidine + H2O2. Its pathway is amine and polyamine degradation; spermine degradation. Functionally, flavoenzyme involved in polyamine back-conversion. Catalyzes the oxidation of the secondary amino group of polyamines, such as spermine and its acetyl derivatives. Substrate preference is spermine &gt; N(1)-acetylspermine &gt; thermospermine &gt; norspermine. Plays an important role in the regulation of polyamine intracellular concentration. Involved in xylem differentiation by controlling thermospermine homeostasis, and participating in the tightly controlled interplay between auxin and cytokinin that is necessary for proper xylem differentiation. Involved in the production of hydrogen peroxide in response to salt and cold stresses. This Arabidopsis thaliana (Mouse-ear cress) protein is Probable polyamine oxidase 5.